Consider the following 302-residue polypeptide: Putative S-adenosyl-L-methionine-dependent methyltransferase MMAR_1068 (302 aa).

S-adenosyl-L-methionine-binding positions include aspartate 127 and 156 to 157 (DL).

This sequence belongs to the UPF0677 family.

In terms of biological role, exhibits S-adenosyl-L-methionine-dependent methyltransferase activity. This Mycobacterium marinum (strain ATCC BAA-535 / M) protein is Putative S-adenosyl-L-methionine-dependent methyltransferase MMAR_1068.